Consider the following 473-residue polypeptide: 3-isopropylmalate dehydratase large subunit (473 aa).

[4Fe-4S] cluster-binding residues include Cys354, Cys414, and Cys417.

Belongs to the aconitase/IPM isomerase family. LeuC type 1 subfamily. In terms of assembly, heterodimer of LeuC and LeuD. The cofactor is [4Fe-4S] cluster.

It catalyses the reaction (2R,3S)-3-isopropylmalate = (2S)-2-isopropylmalate. The protein operates within amino-acid biosynthesis; L-leucine biosynthesis; L-leucine from 3-methyl-2-oxobutanoate: step 2/4. Its function is as follows. Catalyzes the isomerization between 2-isopropylmalate and 3-isopropylmalate, via the formation of 2-isopropylmaleate. The sequence is that of 3-isopropylmalate dehydratase large subunit from Mycobacterium marinum (strain ATCC BAA-535 / M).